A 973-amino-acid chain; its full sequence is EF-hand calcium-binding domain-containing protein 13 (973 aa).

Positions 384 to 448 (YSKNGINFKK…HSSLQKQVSS (65 aa)) are disordered. A compositionally biased stretch (basic and acidic residues) spans 396-405 (EKGEIHDSKS). A compositionally biased stretch (low complexity) spans 406-418 (KPQSLKSSTSLSK). EF-hand domains are found at residues 488–523 (LLDEEFQKIVTDTSRNENGMVELDDFVNALAKERSF), 524–559 (PECNALPGVIKAIDKIKDKNVDYEDLNTCLQNFGIY), 633–668 (LKKDEFLAALELVTVDEGDKVQFEEFAKVVRNMRDA), 756–791 (PKVNEIKEAANILSHVDNGKIGIPDLEHALKCLNVN), 792–827 (LTEEDFNEALNCCNVSDNMEVDLKDFLMKMKESPHF), and 864–899 (TANAILTVMLRHVPEHESGKVSIQEFMTKLSDILTI).

In Homo sapiens (Human), this protein is EF-hand calcium-binding domain-containing protein 13 (EFCAB13).